We begin with the raw amino-acid sequence, 673 residues long: UvrABC system protein B (673 aa).

One can recognise a Helicase ATP-binding domain in the interval E24 to R182. G37–T44 is an ATP binding site. The Beta-hairpin signature appears at Y90–I113. The Helicase C-terminal domain occupies Q429–K591. The UVR domain maps to T634–I669.

Belongs to the UvrB family. As to quaternary structure, forms a heterotetramer with UvrA during the search for lesions. Interacts with UvrC in an incision complex.

Its subcellular location is the cytoplasm. The UvrABC repair system catalyzes the recognition and processing of DNA lesions. A damage recognition complex composed of 2 UvrA and 2 UvrB subunits scans DNA for abnormalities. Upon binding of the UvrA(2)B(2) complex to a putative damaged site, the DNA wraps around one UvrB monomer. DNA wrap is dependent on ATP binding by UvrB and probably causes local melting of the DNA helix, facilitating insertion of UvrB beta-hairpin between the DNA strands. Then UvrB probes one DNA strand for the presence of a lesion. If a lesion is found the UvrA subunits dissociate and the UvrB-DNA preincision complex is formed. This complex is subsequently bound by UvrC and the second UvrB is released. If no lesion is found, the DNA wraps around the other UvrB subunit that will check the other stand for damage. This Cytophaga hutchinsonii (strain ATCC 33406 / DSM 1761 / CIP 103989 / NBRC 15051 / NCIMB 9469 / D465) protein is UvrABC system protein B.